A 100-amino-acid polypeptide reads, in one-letter code: UPF0235 protein NE0395 (100 aa).

Belongs to the UPF0235 family.

This is UPF0235 protein NE0395 from Nitrosomonas europaea (strain ATCC 19718 / CIP 103999 / KCTC 2705 / NBRC 14298).